The primary structure comprises 199 residues: Probable GTP-binding protein EngB (199 aa).

The EngB-type G domain maps to 28–199 (DIPEIALAGR…QAWDAILEQI (172 aa)). GTP is bound by residues 36-43 (GRSNVGKS), 63-67 (GKTQL), 81-84 (DVPG), 148-151 (TKAD), and 180-182 (FSS). Residues Ser-43 and Thr-65 each contribute to the Mg(2+) site.

It belongs to the TRAFAC class TrmE-Era-EngA-EngB-Septin-like GTPase superfamily. EngB GTPase family. Mg(2+) is required as a cofactor.

Necessary for normal cell division and for the maintenance of normal septation. The protein is Probable GTP-binding protein EngB of Streptococcus uberis (strain ATCC BAA-854 / 0140J).